A 212-amino-acid chain; its full sequence is Thymidylate kinase (212 aa).

Residue 10–17 (GLEGAGKT) coordinates ATP.

This sequence belongs to the thymidylate kinase family.

It carries out the reaction dTMP + ATP = dTDP + ADP. Phosphorylation of dTMP to form dTDP in both de novo and salvage pathways of dTTP synthesis. This is Thymidylate kinase from Photorhabdus laumondii subsp. laumondii (strain DSM 15139 / CIP 105565 / TT01) (Photorhabdus luminescens subsp. laumondii).